A 484-amino-acid polypeptide reads, in one-letter code: tRNA sulfurtransferase (484 aa).

A THUMP domain is found at 63-167; sequence QAFGERLACI…GDKLYMVTKR (105 aa). ATP is bound by residues 185-186, Lys267, Gly289, and Gln298; that span reads LI. A disulfide bridge connects residues Cys346 and Cys458. A Rhodanese domain is found at 406-484; sequence IDTNEVVIDI…GYHNVKVYRP (79 aa). Cys458 (cysteine persulfide intermediate) is an active-site residue.

This sequence belongs to the ThiI family.

It is found in the cytoplasm. It carries out the reaction [ThiI sulfur-carrier protein]-S-sulfanyl-L-cysteine + a uridine in tRNA + 2 reduced [2Fe-2S]-[ferredoxin] + ATP + H(+) = [ThiI sulfur-carrier protein]-L-cysteine + a 4-thiouridine in tRNA + 2 oxidized [2Fe-2S]-[ferredoxin] + AMP + diphosphate. The catalysed reaction is [ThiS sulfur-carrier protein]-C-terminal Gly-Gly-AMP + S-sulfanyl-L-cysteinyl-[cysteine desulfurase] + AH2 = [ThiS sulfur-carrier protein]-C-terminal-Gly-aminoethanethioate + L-cysteinyl-[cysteine desulfurase] + A + AMP + 2 H(+). Its pathway is cofactor biosynthesis; thiamine diphosphate biosynthesis. Its function is as follows. Catalyzes the ATP-dependent transfer of a sulfur to tRNA to produce 4-thiouridine in position 8 of tRNAs, which functions as a near-UV photosensor. Also catalyzes the transfer of sulfur to the sulfur carrier protein ThiS, forming ThiS-thiocarboxylate. This is a step in the synthesis of thiazole, in the thiamine biosynthesis pathway. The sulfur is donated as persulfide by IscS. In Shewanella oneidensis (strain ATCC 700550 / JCM 31522 / CIP 106686 / LMG 19005 / NCIMB 14063 / MR-1), this protein is tRNA sulfurtransferase.